A 405-amino-acid chain; its full sequence is L-rhamnonate dehydratase (405 aa).

Substrate-binding residues include histidine 33 and arginine 59. 3 residues coordinate Mg(2+): aspartate 226, glutamate 252, and glutamate 280. Histidine 329 functions as the Proton acceptor in the catalytic mechanism. Glutamate 349 lines the substrate pocket.

Belongs to the mandelate racemase/muconate lactonizing enzyme family. RhamD subfamily. Homooctamer; tetramer of dimers. Requires Mg(2+) as cofactor.

It carries out the reaction L-rhamnonate = 2-dehydro-3-deoxy-L-rhamnonate + H2O. Functionally, catalyzes the dehydration of L-rhamnonate to 2-keto-3-deoxy-L-rhamnonate (KDR). The protein is L-rhamnonate dehydratase of Escherichia coli O6:H1 (strain CFT073 / ATCC 700928 / UPEC).